The chain runs to 709 residues: MIRIHKDKYFDSIYDELLEQATQEKYMDEYLLEKFMKRYFNGKCSYCEIRMKELRLTIDFYRPINGSLNTMDGEFHPDHYKWLKNEDDNILSICVECKRAKSNRFPVDGDVASINADKNKLVKERRLLIHPCRDYPERHFDYDESGMVYYKSKKGEVTVDVLNLNRGMLVEMRAQVYSEFNNLCYLFSMEQSPYYLKQILQEVQLDSIFIGLKKFILSEWVILNEKIPFLQEFEPLLGKRLQEEEVRVLSVRNNKISQIDIDNNILYVDNDKRRKRVPARKINDYYDVSDENALEKYYGKQRFIEKIEIYNFKSIRNMKIDFTLSKSSNAPWLMLLGENGVGKSSILQAIALTLMGNEQRQKIIKKKPYEYLTKGFDEGSIKIKLSGMQEPISIYLNSNSFEFTGENHQRPRVLILGYGSTRLLPREEMLSNYKVTWARIENLFNPFIPLVNVREYLLSLNNEDFNNVKKAIESLFLDEVIIDRDQIYEEVYFGFANSYSKLEDLSDGYQTIIALATDIMMVMKNRWRNFDAEGIVLIDEIDAHLHPRWNIEIVSRLKNAFPKIQFIATTHNPLSLRGLIDGEVAVLLENEEREAYITQKLPSQKGFNVEGLLTSKFFGLYDTMPDLNELFDRYYLLLSNPSPNERQKEEIKNLQDKLSKYEKVGTTLREQKFYEAVDYYFAQYRKNNVELSDEEFNNIIEDAIKYFER.

In terms of biological role, component of antiviral defense system Septu type II, composed of PtuA and PtuB. Expression of Septu type II in B.subtilis (strain BEST7003) confers resistance to phages SBSphiC and SpBeta. May be an ATPase. The protein is Septu protein PtuA of Bacillus mycoides (strain KBAB4) (Bacillus weihenstephanensis).